Reading from the N-terminus, the 338-residue chain is Glycerol-3-phosphate dehydrogenase [NAD(P)+] (338 aa).

NADPH is bound by residues Ser13, Trp14, and Lys108. 3 residues coordinate sn-glycerol 3-phosphate: Lys108, Gly139, and Ser141. Ala143 contacts NADPH. Sn-glycerol 3-phosphate contacts are provided by Lys194, Asp247, Ser257, Arg258, and Asn259. The active-site Proton acceptor is Lys194. Position 258 (Arg258) interacts with NADPH. Positions 282 and 284 each coordinate NADPH.

Belongs to the NAD-dependent glycerol-3-phosphate dehydrogenase family.

The protein resides in the cytoplasm. The enzyme catalyses sn-glycerol 3-phosphate + NAD(+) = dihydroxyacetone phosphate + NADH + H(+). The catalysed reaction is sn-glycerol 3-phosphate + NADP(+) = dihydroxyacetone phosphate + NADPH + H(+). The protein operates within membrane lipid metabolism; glycerophospholipid metabolism. Catalyzes the reduction of the glycolytic intermediate dihydroxyacetone phosphate (DHAP) to sn-glycerol 3-phosphate (G3P), the key precursor for phospholipid synthesis. In Streptococcus gordonii (strain Challis / ATCC 35105 / BCRC 15272 / CH1 / DL1 / V288), this protein is Glycerol-3-phosphate dehydrogenase [NAD(P)+].